Consider the following 425-residue polypeptide: Serine--tRNA ligase (425 aa).

A disordered region spans residues 108–134 (YPNLPSEACPDGRSEDDNKEVRRWGDP). Basic and acidic residues predominate over residues 117 to 134 (PDGRSEDDNKEVRRWGDP). 233–235 (TAE) is a binding site for L-serine. 264–266 (RRE) is an ATP binding site. L-serine is bound at residue Glu-287. 351–354 (EISS) is an ATP binding site. Ser-385 serves as a coordination point for L-serine.

It belongs to the class-II aminoacyl-tRNA synthetase family. Type-1 seryl-tRNA synthetase subfamily. In terms of assembly, homodimer. The tRNA molecule binds across the dimer.

Its subcellular location is the cytoplasm. The enzyme catalyses tRNA(Ser) + L-serine + ATP = L-seryl-tRNA(Ser) + AMP + diphosphate + H(+). It carries out the reaction tRNA(Sec) + L-serine + ATP = L-seryl-tRNA(Sec) + AMP + diphosphate + H(+). It participates in aminoacyl-tRNA biosynthesis; selenocysteinyl-tRNA(Sec) biosynthesis; L-seryl-tRNA(Sec) from L-serine and tRNA(Sec): step 1/1. Catalyzes the attachment of serine to tRNA(Ser). Is also able to aminoacylate tRNA(Sec) with serine, to form the misacylated tRNA L-seryl-tRNA(Sec), which will be further converted into selenocysteinyl-tRNA(Sec). This Synechococcus sp. (strain CC9311) protein is Serine--tRNA ligase.